The chain runs to 376 residues: T-box transcription factor 18 (376 aa).

Residues 38–63 (STSRPSSSSPPSLPAVSSELLSSSFP) show a composition bias toward low complexity. Residues 38-76 (STSRPSSSSPPSLPAVSSELLSSSFPTNAPESSSRDLAP) form a disordered region. The segment at residues 171 to 364 (LANQEQWAKF…GNKYCRTDRK (194 aa)) is a DNA-binding region (T-box).

It is found in the nucleus. In terms of biological role, transcriptional regulator involved in developmental processes. Directly binds to the promoter region of the sex-determining factor xol-1 to activate its transcription. Its activation of xol-1 transcription controls sex determination and X chromosome dosage compensation to promote male development. Has a role in the fox-1-sex-1-mediated determination of sexual fate. The chain is T-box transcription factor 18 from Caenorhabditis elegans.